The sequence spans 614 residues: DNA mismatch repair protein MutL (614 aa).

It belongs to the DNA mismatch repair MutL/HexB family.

In terms of biological role, this protein is involved in the repair of mismatches in DNA. It is required for dam-dependent methyl-directed DNA mismatch repair. May act as a 'molecular matchmaker', a protein that promotes the formation of a stable complex between two or more DNA-binding proteins in an ATP-dependent manner without itself being part of a final effector complex. The chain is DNA mismatch repair protein MutL from Leptospira biflexa serovar Patoc (strain Patoc 1 / ATCC 23582 / Paris).